A 336-amino-acid polypeptide reads, in one-letter code: MRPRYSLILSAMRLIRPSNRRLSSIASSDSEFISYMKNKAKSINKALDNSIPLCNNFVPLWEPVLEVHKAMRYTLLPGGKRVRPMLCLVACELVGGQESTAMPAACAVEMIHAASLILDDLPCMDDDSLRRGKPTNHKVFGEKTSILASNALRSLAVKQTLASTSLGVTSERVLRAVQEMARAVGTEGLVAGQAADLAGERMSFKNEDDELRYLELMHVHKTAVLVEAAAVVGAIMGGGSDEEIERLKSYARCVGLMFQVMDDVLDETKSSEELGKTAGKDLITGKLTYPKVMGVDNAREYAKRLNREAQEHLQGFDSDKVVPLLSLADYIVKRQN.

A mitochondrion-targeting transit peptide spans 1–22; the sequence is MRPRYSLILSAMRLIRPSNRRL. Residues Lys80, Arg83, and His112 each contribute to the isopentenyl diphosphate site. 2 residues coordinate Mg(2+): Asp119 and Asp125. Arg130 lines the dimethylallyl diphosphate pocket. Residue Arg131 participates in isopentenyl diphosphate binding. The dimethylallyl diphosphate site is built by Lys221, Thr222, Gln259, Lys276, and Lys286.

This sequence belongs to the FPP/GGPP synthase family. In terms of assembly, monomer. Requires Mg(2+) as cofactor.

The protein resides in the mitochondrion. The catalysed reaction is isopentenyl diphosphate + dimethylallyl diphosphate = (2E)-geranyl diphosphate + diphosphate. It carries out the reaction isopentenyl diphosphate + (2E)-geranyl diphosphate = (2E,6E)-farnesyl diphosphate + diphosphate. The enzyme catalyses isopentenyl diphosphate + (2E,6E)-farnesyl diphosphate = (2E,6E,10E)-geranylgeranyl diphosphate + diphosphate. The protein operates within isoprenoid biosynthesis; farnesyl diphosphate biosynthesis; farnesyl diphosphate from geranyl diphosphate and isopentenyl diphosphate: step 1/1. It functions in the pathway isoprenoid biosynthesis; geranyl diphosphate biosynthesis; geranyl diphosphate from dimethylallyl diphosphate and isopentenyl diphosphate: step 1/1. It participates in isoprenoid biosynthesis; geranylgeranyl diphosphate biosynthesis; geranylgeranyl diphosphate from farnesyl diphosphate and isopentenyl diphosphate: step 1/1. Its function is as follows. Catalyzes the trans-addition of the three molecules of IPP onto DMAPP to form geranylgeranyl pyrophosphate. The polypeptide is Geranylgeranyl pyrophosphate synthase 6, mitochondrial (Arabidopsis thaliana (Mouse-ear cress)).